Consider the following 276-residue polypeptide: Urease accessory protein UreD (276 aa).

The protein belongs to the UreD family. UreD, UreF and UreG form a complex that acts as a GTP-hydrolysis-dependent molecular chaperone, activating the urease apoprotein by helping to assemble the nickel containing metallocenter of UreC. The UreE protein probably delivers the nickel.

Its subcellular location is the cytoplasm. Functionally, required for maturation of urease via the functional incorporation of the urease nickel metallocenter. The polypeptide is Urease accessory protein UreD (Variovorax paradoxus (strain S110)).